The following is a 301-amino-acid chain: 4-hydroxy-tetrahydrodipicolinate synthase (301 aa).

Threonine 57 contacts pyruvate. Tyrosine 145 functions as the Proton donor/acceptor in the catalytic mechanism. Lysine 173 functions as the Schiff-base intermediate with substrate in the catalytic mechanism. Residue isoleucine 213 participates in pyruvate binding.

Belongs to the DapA family. As to quaternary structure, homotetramer; dimer of dimers.

Its subcellular location is the cytoplasm. It catalyses the reaction L-aspartate 4-semialdehyde + pyruvate = (2S,4S)-4-hydroxy-2,3,4,5-tetrahydrodipicolinate + H2O + H(+). Its pathway is amino-acid biosynthesis; L-lysine biosynthesis via DAP pathway; (S)-tetrahydrodipicolinate from L-aspartate: step 3/4. Its function is as follows. Catalyzes the condensation of (S)-aspartate-beta-semialdehyde [(S)-ASA] and pyruvate to 4-hydroxy-tetrahydrodipicolinate (HTPA). The polypeptide is 4-hydroxy-tetrahydrodipicolinate synthase (Corynebacterium diphtheriae (strain ATCC 700971 / NCTC 13129 / Biotype gravis)).